The sequence spans 374 residues: o-succinylbenzoate synthase (374 aa).

Lys164 (proton donor) is an active-site residue. Mg(2+)-binding residues include Asp189, Glu214, and Asp239. The Proton acceptor role is filled by Lys263.

This sequence belongs to the mandelate racemase/muconate lactonizing enzyme family. MenC type 2 subfamily. As to quaternary structure, homodimer. It depends on a divalent metal cation as a cofactor.

It carries out the reaction (1R,6R)-6-hydroxy-2-succinyl-cyclohexa-2,4-diene-1-carboxylate = 2-succinylbenzoate + H2O. It participates in quinol/quinone metabolism; 1,4-dihydroxy-2-naphthoate biosynthesis; 1,4-dihydroxy-2-naphthoate from chorismate: step 4/7. Its pathway is quinol/quinone metabolism; menaquinone biosynthesis. Converts 2-succinyl-6-hydroxy-2,4-cyclohexadiene-1-carboxylate (SHCHC) to 2-succinylbenzoate (OSB). Also acts as a N-succinylamino acid racemase (NSAR) that catalyzes the racemization of N-succinyl-L-phenylglycine. L.innocua has the menaquinone synthesis pathway, indicating that the species requires OSBS activity. However, the NSAR/OSBS is not encoded in the menaquinone operon, raising the possibility that both NSAR and OSBS are biological functions. This Listeria innocua serovar 6a (strain ATCC BAA-680 / CLIP 11262) protein is o-succinylbenzoate synthase.